The sequence spans 283 residues: Pantothenate synthetase (283 aa).

Residue 30–37 (MGNLHDGH) participates in ATP binding. H37 serves as the catalytic Proton donor. Q61 contacts (R)-pantoate. Q61 serves as a coordination point for beta-alanine. An ATP-binding site is contributed by 149 to 152 (GEKD). Q155 is a (R)-pantoate binding site. An ATP-binding site is contributed by 186-189 (LSSR).

The protein belongs to the pantothenate synthetase family. As to quaternary structure, homodimer.

It is found in the cytoplasm. The enzyme catalyses (R)-pantoate + beta-alanine + ATP = (R)-pantothenate + AMP + diphosphate + H(+). Its pathway is cofactor biosynthesis; (R)-pantothenate biosynthesis; (R)-pantothenate from (R)-pantoate and beta-alanine: step 1/1. Catalyzes the condensation of pantoate with beta-alanine in an ATP-dependent reaction via a pantoyl-adenylate intermediate. This is Pantothenate synthetase from Escherichia coli O127:H6 (strain E2348/69 / EPEC).